Here is a 228-residue protein sequence, read N- to C-terminus: UPF0758 protein NT01CX_1687 (228 aa).

An MPN domain is found at 106-228; that stretch reads IIKSPGDVAG…YISLKEKNIL (123 aa). Zn(2+) contacts are provided by H177, H179, and D190. The JAMM motif signature appears at 177–190; the sequence is HNHPSGDPTPSSED.

It belongs to the UPF0758 family.

This chain is UPF0758 protein NT01CX_1687, found in Clostridium novyi (strain NT).